The following is a 123-amino-acid chain: uncharacterized protein (123 aa).

Residues 1–24 (MGGGGPPARVQGTEGSQTGGGAVA) form a disordered region.

This is an uncharacterized protein from Halorubrum pleomorphic virus 1 (HRPV-1).